A 94-amino-acid polypeptide reads, in one-letter code: Co-chaperonin GroES (94 aa).

The protein belongs to the GroES chaperonin family. As to quaternary structure, heptamer of 7 subunits arranged in a ring. Interacts with the chaperonin GroEL.

Its subcellular location is the cytoplasm. In terms of biological role, together with the chaperonin GroEL, plays an essential role in assisting protein folding. The GroEL-GroES system forms a nano-cage that allows encapsulation of the non-native substrate proteins and provides a physical environment optimized to promote and accelerate protein folding. GroES binds to the apical surface of the GroEL ring, thereby capping the opening of the GroEL channel. The protein is Co-chaperonin GroES of Lactobacillus gasseri (strain ATCC 33323 / DSM 20243 / BCRC 14619 / CIP 102991 / JCM 1131 / KCTC 3163 / NCIMB 11718 / NCTC 13722 / AM63).